The sequence spans 289 residues: Signal peptidase I (289 aa).

Topologically, residues 1-43 (MKKLTSTTTTLWDNKLFINNLKNFMQTNTESNNNKTTAQEWKS) are cytoplasmic. The helical transmembrane segment at 44-64 (FILVVVIALMIRILIIESFVV) threads the bilayer. Over 65–289 (PTGSMKATIL…IFRNLYSIED (225 aa)) the chain is Periplasmic. Residues Ser68 and Lys131 contribute to the active site.

The protein belongs to the peptidase S26 family.

The protein localises to the cell inner membrane. It catalyses the reaction Cleavage of hydrophobic, N-terminal signal or leader sequences from secreted and periplasmic proteins.. In Rickettsia bellii (strain OSU 85-389), this protein is Signal peptidase I (lepB).